The following is a 354-amino-acid chain: Guanine nucleotide-binding protein G(i) subunit alpha-1 (354 aa).

Residue glycine 2 is the site of N-myristoyl glycine attachment. Cysteine 3 carries the S-palmitoyl cysteine lipid modification. The 323-residue stretch at 32-354 folds into the G-alpha domain; the sequence is REVKLLLLGA…KNNLKDCGLF (323 aa). Residues 35–48 are G1 motif; the sequence is KLLLLGAGESGKST. GTP-binding positions include 43 to 48, 150 to 151, and 175 to 178; these read ESGKST, DS, and LRTR. A Mg(2+)-binding site is contributed by serine 47. Residues 173–181 form a G2 motif region; it reads DVLRTRVKT. Threonine 181 is a Mg(2+) binding site. The interval 196–205 is G3 motif; that stretch reads FKMFDVGGQR. GTP-binding positions include 200 to 204, 269 to 272, and alanine 326; these read DVGGQ and NKKD. The tract at residues 265 to 272 is G4 motif; sequence ILFLNKKD. Positions 324–329 are G5 motif; sequence TCATDT.

This sequence belongs to the G-alpha family. G(i/o/t/z) subfamily. Heterotrimeric G proteins are composed of 3 units; alpha, beta and gamma. The alpha chain contains the guanine nucleotide binding site. Part of a spindle orientation complex. Identified in complex with the beta subunit GNB1 and the gamma subunit GNG1. Identified in complex with the beta subunit GNB1 and the gamma subunit GNG2. GTP binding causes dissociation of the heterotrimer, liberating the individual subunits so that they can interact with downstream effector proteins. Myristoylation at Gly-2 is required for membrane anchoring before palmitoylation. Post-translationally, palmitoylation at Cys-3 varies with membrane lipid composition.

Its subcellular location is the nucleus. The protein localises to the cytoplasm. It is found in the cell membrane. The protein resides in the cytoskeleton. It localises to the microtubule organizing center. Its subcellular location is the centrosome. The protein localises to the cell cortex. It is found in the membrane. It catalyses the reaction GTP + H2O = GDP + phosphate + H(+). In terms of biological role, guanine nucleotide-binding proteins (G proteins) function as transducers downstream of G protein-coupled receptors (GPCRs) in numerous signaling cascades. The alpha chain contains the guanine nucleotide binding site and alternates between an active, GTP-bound state and an inactive, GDP-bound state. Signaling by an activated GPCR promotes GDP release and GTP binding. The alpha subunit has a low GTPase activity that converts bound GTP to GDP, thereby terminating the signal. Both GDP release and GTP hydrolysis are modulated by numerous regulatory proteins. Signaling is mediated via effector proteins, such as adenylate cyclase. Inhibits adenylate cyclase activity, leading to decreased intracellular cAMP levels. Required for cortical dynein-dynactin complex recruitment during metaphase. The polypeptide is Guanine nucleotide-binding protein G(i) subunit alpha-1 (gnai1) (Xenopus laevis (African clawed frog)).